The primary structure comprises 568 residues: MTLRLSRRAYAEMFGPTTGDRVRLADTELLIEIERDFTTYGEEVKFGGGKVIRDGMGQSQRVAADVPDTVITNAVILDHWGIVKADIAIKHGRIAAIGKAGNPDIQPGVTIAIGAATEVIAGEGLIVTAGGIDTHIHFISPQQIDEALASGVTTMLGGGTGPATGTNATTCTPGPWHMERMLQAADGWPINLGFLGKGNASLPQPLVEQIAAGAIGLKLHEDWGTTPAAIDNCLSVADDTDTQVAIHTDTLNEAGFVESTVAAFKGRTIHTYHTEGAGGGHAPDILKVCGEMNVLPSSTNPTRPYTINTLDEHLDMLMVCHHLDPSIAEDLAFAESRIRRETIAAEDILHDLGALSMLSSDSQAMGRVGEVIIRTWQTAHKMKVQRGALPEDTARNDNFRAKRYVAKYTINPALTHGIAHEVGSIEPGKWADLVLWEPAFFGIKPSMILKGGMIAVAQMGDPNASIPTPQPVHYREMFATRGGALARTSLTFVSQMAADAGIAERYGLAKRIVPVRNCRNVTKADMIHNAWRPSISVDPETYDVIADGQLLTCEPATVLPMAQRYFLF.

A Urease domain is found at 130 to 568; sequence GGIDTHIHFI…LPMAQRYFLF (439 aa). Ni(2+) contacts are provided by His135, His137, and Lys218. Lys218 carries the N6-carboxylysine modification. Residue His220 participates in substrate binding. 2 residues coordinate Ni(2+): His247 and His273. His321 (proton donor) is an active-site residue. Asp361 lines the Ni(2+) pocket.

It belongs to the metallo-dependent hydrolases superfamily. Urease alpha subunit family. Heterotrimer of UreA (gamma), UreB (beta) and UreC (alpha) subunits. Three heterotrimers associate to form the active enzyme. Requires Ni cation as cofactor. Carboxylation allows a single lysine to coordinate two nickel ions.

The protein resides in the cytoplasm. It catalyses the reaction urea + 2 H2O + H(+) = hydrogencarbonate + 2 NH4(+). The protein operates within nitrogen metabolism; urea degradation; CO(2) and NH(3) from urea (urease route): step 1/1. In Burkholderia orbicola (strain MC0-3), this protein is Urease subunit alpha.